The sequence spans 68 residues: MKASELRALDDAQLRAKLSEYKVELFNLRFQKATGKLTNTARPKQVKKDIARILTILRERELAQAELG.

Belongs to the universal ribosomal protein uL29 family.

This Chloroflexus aggregans (strain MD-66 / DSM 9485) protein is Large ribosomal subunit protein uL29.